A 24-amino-acid polypeptide reads, in one-letter code: Coenzyme PQQ synthesis protein A (24 aa).

Residues 16–20 constitute a cross-link (pyrroloquinoline quinone (Glu-Tyr)); the sequence is EITMY.

The protein belongs to the PqqA family.

The protein operates within cofactor biosynthesis; pyrroloquinoline quinone biosynthesis. Required for coenzyme pyrroloquinoline quinone (PQQ) biosynthesis. PQQ is probably formed by cross-linking a specific glutamate to a specific tyrosine residue and excising these residues from the peptide. In Burkholderia cenocepacia (strain ATCC BAA-245 / DSM 16553 / LMG 16656 / NCTC 13227 / J2315 / CF5610) (Burkholderia cepacia (strain J2315)), this protein is Coenzyme PQQ synthesis protein A.